A 227-amino-acid chain; its full sequence is Orotidine 5'-phosphate decarboxylase (227 aa).

Substrate is bound by residues Asp8, Lys30, 58 to 67 (DLKVHDIPNT), Thr117, Arg177, Gln186, Gly206, and Arg207. Lys60 functions as the Proton donor in the catalytic mechanism.

This sequence belongs to the OMP decarboxylase family. Type 1 subfamily. As to quaternary structure, homodimer.

The enzyme catalyses orotidine 5'-phosphate + H(+) = UMP + CO2. It participates in pyrimidine metabolism; UMP biosynthesis via de novo pathway; UMP from orotate: step 2/2. Catalyzes the decarboxylation of orotidine 5'-monophosphate (OMP) to uridine 5'-monophosphate (UMP). The protein is Orotidine 5'-phosphate decarboxylase of Campylobacter fetus subsp. fetus (strain 82-40).